A 320-amino-acid polypeptide reads, in one-letter code: Phosphatidylserine decarboxylase proenzyme (320 aa).

Residues D90, H147, and S254 each act as charge relay system; for autoendoproteolytic cleavage activity in the active site. The active-site Schiff-base intermediate with substrate; via pyruvic acid; for decarboxylase activity is the S254. Pyruvic acid (Ser); by autocatalysis is present on S254. Residues 290 to 320 (TAAAEPAPLPEEEIRAEHRASPLVDDKQDQG) are disordered. Over residues 301–320 (EEIRAEHRASPLVDDKQDQG) the composition is skewed to basic and acidic residues.

This sequence belongs to the phosphatidylserine decarboxylase family. PSD-B subfamily. Prokaryotic type I sub-subfamily. In terms of assembly, heterodimer of a large membrane-associated beta subunit and a small pyruvoyl-containing alpha subunit. Pyruvate is required as a cofactor. In terms of processing, is synthesized initially as an inactive proenzyme. Formation of the active enzyme involves a self-maturation process in which the active site pyruvoyl group is generated from an internal serine residue via an autocatalytic post-translational modification. Two non-identical subunits are generated from the proenzyme in this reaction, and the pyruvate is formed at the N-terminus of the alpha chain, which is derived from the carboxyl end of the proenzyme. The autoendoproteolytic cleavage occurs by a canonical serine protease mechanism, in which the side chain hydroxyl group of the serine supplies its oxygen atom to form the C-terminus of the beta chain, while the remainder of the serine residue undergoes an oxidative deamination to produce ammonia and the pyruvoyl prosthetic group on the alpha chain. During this reaction, the Ser that is part of the protease active site of the proenzyme becomes the pyruvoyl prosthetic group, which constitutes an essential element of the active site of the mature decarboxylase.

Its subcellular location is the cell membrane. The enzyme catalyses a 1,2-diacyl-sn-glycero-3-phospho-L-serine + H(+) = a 1,2-diacyl-sn-glycero-3-phosphoethanolamine + CO2. It participates in phospholipid metabolism; phosphatidylethanolamine biosynthesis; phosphatidylethanolamine from CDP-diacylglycerol: step 2/2. Catalyzes the formation of phosphatidylethanolamine (PtdEtn) from phosphatidylserine (PtdSer). The chain is Phosphatidylserine decarboxylase proenzyme from Klebsiella pneumoniae subsp. pneumoniae (strain ATCC 700721 / MGH 78578).